The primary structure comprises 458 residues: MGSKTPERDGHKGQENTTGPVECPLGGMPRGMHLATDGDGTIGDSGDDDDGEAHSTALINANANGNQKKKRKSKKKGKKKAAKQSSPPRVPLSQLFLQGKYPIGEVQEYQPNVENTSRTTAEEVRYKSRSHLEDDSFLNDYRKAAEVHRQVRKWTQERVKPGQGLMEIAEDIDDGVRALLGHAGLEPGDSLKAGLGFPTGLSLNNVVAHYTPNPGQKDIILQSSDVMKVDFGVHINGWIVDSAFTMTFDPVYDNLLAAVKDATNAGLKTAGIDVRISDVSAAIQEAMESYEVEIGGKTFPVKAVRNITGHNIKHYQIHGGKSVPFVKNSDQTKMEEGEIFAIETFGSTGRGYIYDDVGVYGYGKSYDAPRQVSLPLASARSLYKTINENFGTIVFCRRYLDRLGLQRYLAGMNTLVQHGVVDVYAPLVDIKGSYSAQFEHTVLLRESNKEVISRGDDY.

Residues 1-14 (MGSKTPERDGHKGQ) are compositionally biased toward basic and acidic residues. Residues 1 to 93 (MGSKTPERDG…QSSPPRVPLS (93 aa)) are disordered. The span at 67–82 (QKKKRKSKKKGKKKAA) shows a compositional bias: basic residues. Position 209 (H209) interacts with substrate. The a divalent metal cation site is built by D230, D241, and H310. H318 lines the substrate pocket. The a divalent metal cation site is built by E343 and E439.

It belongs to the peptidase M24A family. Methionine aminopeptidase eukaryotic type 2 subfamily. Requires Co(2+) as cofactor. It depends on Zn(2+) as a cofactor. The cofactor is Mn(2+). Fe(2+) serves as cofactor.

It is found in the cytoplasm. The enzyme catalyses Release of N-terminal amino acids, preferentially methionine, from peptides and arylamides.. In terms of biological role, cotranslationally removes the N-terminal methionine from nascent proteins. The N-terminal methionine is often cleaved when the second residue in the primary sequence is small and uncharged (Met-Ala-, Cys, Gly, Pro, Ser, Thr, or Val). This Emericella nidulans (strain FGSC A4 / ATCC 38163 / CBS 112.46 / NRRL 194 / M139) (Aspergillus nidulans) protein is Methionine aminopeptidase 2-2.